Consider the following 2025-residue polypeptide: Pericentriolar material 1 protein (2025 aa).

Residues 1-91 (MATGGGPFEE…TFPHSRYMTQ (91 aa)) are disordered. Residue Ala-2 is modified to N-acetylalanine. The tract at residues 2-1458 (ATGGGPFEEV…TWVASNSELT (1457 aa)) is mediates interaction with DZIP1. Residues Ser-65, Ser-68, Ser-69, Ser-93, Ser-110, Ser-116, Ser-119, and Ser-159 each carry the phosphoserine modification. The tract at residues 111–140 (DLDQRSIGSDSQGRATAANNKRQLSENRKP) is disordered. Residues 116–132 (SIGSDSQGRATAANNKR) are compositionally biased toward polar residues. Positions 218–301 (KASSMREDLV…QLRALQGRQA (84 aa)) form a coiled coil. Residues 354-390 (RDSQPPAVPDNRRQAESLSLTREISQSRNPSVSEHLP) are disordered. Residues 369 to 385 (ESLSLTREISQSRNPSV) show a composition bias toward polar residues. Residue Ser-370 is modified to Phosphoserine. Ser-372 bears the Phosphoserine; by PLK4 mark. Ser-384 bears the Phosphoserine mark. Lys-399 is subject to N6-acetyllysine. Coiled-coil stretches lie at residues 399–426 (KMRVLQEKKQKMDKLLGELHNLRDQHLN) and 492–518 (AEKLQKLNEVQKRLNELRELVHYYEQT). Disordered regions lie at residues 528–553 (ENTKDEETEESEYDSEHENSEPVTNI) and 565–586 (VNTNSNTQCGSNNRDGRPVNSN). A compositionally biased stretch (acidic residues) spans 531–540 (KDEETEESEY). The residue at position 593 (Ser-593) is a Phosphoserine. A disordered region spans residues 620–654 (AHGEDEEEEVEEEGVSGASLSSRRSSLVDEAPEDE). The segment covering 623 to 633 (EDEEEEVEEEG) has biased composition (acidic residues). A compositionally biased stretch (low complexity) spans 634-644 (VSGASLSSRRS). Ser-644 carries the post-translational modification Phosphoserine. Coiled-coil stretches lie at residues 652–772 (EDEE…PDLQ) and 822–856 (SDMRRHEMLREELRQRRKQLEALMAEHQRRQGLAE). Phosphothreonine is present on Thr-857. A phosphoserine mark is found at Ser-859, Ser-864, Ser-867, and Ser-870. Disordered regions lie at residues 866 to 885 (RSDGSENLCTPQQSRTEKTM) and 913 to 940 (TDEEEEEEQDASSNDNFPIYPPSMNQNS). Residues 870 to 879 (SENLCTPQQS) show a composition bias toward polar residues. The residue at position 875 (Thr-875) is a Phosphothreonine. Residues Ser-957, Ser-974, Ser-985, and Ser-988 each carry the phosphoserine modification. Coiled-coil stretches lie at residues 985-1017 (SELSYIEEKEQWQEQINQLKKQLDFSVNICQTL) and 1061-1086 (QLTWQQNNVQRLKQMLTELMRQQNQH). Disordered stretches follow at residues 1081 to 1105 (RQQNQHPEKPRSKERGSSASHPSSP) and 1149 to 1213 (FSQN…YDQE). Over residues 1086 to 1096 (HPEKPRSKERG) the composition is skewed to basic and acidic residues. The span at 1149 to 1169 (FSQNVSTPTEQQQPLAQNPSG) shows a compositional bias: polar residues. Phosphoserine is present on residues Ser-1182 and Ser-1185. The span at 1189 to 1198 (EKQRNQKQPE) shows a compositional bias: basic and acidic residues. Phosphoserine is present on residues Ser-1228, Ser-1254, Ser-1257, Ser-1259, and Ser-1260. The segment at 1230–1310 (EKATNSNRKN…STQLKSRVKN (81 aa)) is disordered. Positions 1268–1285 (TTVTKTFKTRKASAQASL) are enriched in polar residues. A phosphoserine mark is found at Ser-1315 and Ser-1317. The disordered stretch occupies residues 1319 to 1338 (SSTCEPCKNRNRHSAQTEEP). Position 1466 is a phosphothreonine (Thr-1466). Residues Ser-1571, Ser-1695, Ser-1729, Ser-1766, Ser-1769, Ser-1777, and Ser-1783 each carry the phosphoserine modification. The interval 1720 to 1943 (KRILEGDHGS…AGSPDTESPV (224 aa)) is disordered. Positions 1756–1768 (YDAKGPKNVRSDV) are enriched in basic and acidic residues. Residues 1784–1798 (INLSKAESQALTNYG) show a composition bias toward polar residues. Residues 1800–1816 (GEDENEDEEMEDFEESP) show a composition bias toward acidic residues. Polar residues-rich tracts occupy residues 1818-1828 (DIQTSLQANTE), 1849-1858 (ESTNVPSDQE), 1879-1901 (ENEQQLNSATHKDSLTTTDSSKQ), and 1925-1934 (AQETPESSLA). Phosphoserine is present on residues Ser-1959 and Ser-1978.

This sequence belongs to the PCM1 family. Self-associates. Interacts with BBS4, BBS8, CETN3, HAP1, NDE1, NDEL1, MAP1LC3B, GABARAPAL2, and GABARAP. Interacts with CEP131; the interaction increases in response to ultraviolet light (UV) radiation. Associates with microtubule; association to microtubule is reduced in response to cellular stress, such as ultraviolet light (UV) radiation or heat shock, in a process that requires p38 MAP kinase signaling. Interacts with C2CD3. Interacts with CFAP263. Interacts with SSX2IP. Interacts with CCDC13. Interacts with CEP290. Interacts with PARD6A. Interacts with KIAA0753/OFIP, CEP20/FOR20 and OFD1; the interaction with CEP20/FOR20 and OFD1 may be mediated by KIAA0753/OFIP. Interacts with CCDC66. Interacts with CCDC61. Interacts with DZIP1; localizes DZIP1 and the associated BBSome to centriolar satellite. Interacts with CSTPP1, TTLL1, TPGS1 and LRRC49. Interacts with CFAP53. Ubiquitinated. Undergoes monoubiquitination catalyzed by the E3 ubiquitin-protein ligase MIB1 in proliferating cells, preventing cilia formation. Monoubiquitination by MIB1 is inhibited in response to cellular stress, such as ultraviolet light (UV) radiation or heat shock, resulting in cilia formation initiation. In terms of processing, phosphorylated on multiple serine and threonine residues by DYRK3 during the G2-to-M transition, after the nuclear-envelope breakdown. Phosphorylation by DYRK3 promotes disassembly of pericentriolar material. Phosphorylation at Ser-372 mediated by PLK4 is required to maintain the integrity of centriolar satellites. Expressed in the hippocampus and dentate gyrus, the columnar epithelial cells of bronchioles, the olfactory epithelium, the pericardium and the inner segment of the retina.

Its subcellular location is the cytoplasm. It localises to the cytoskeleton. It is found in the microtubule organizing center. The protein resides in the centrosome. The protein localises to the cytoplasmic granule. Its subcellular location is the centriolar satellite. It localises to the cilium basal body. Required for centrosome assembly and function. Essential for the correct localization of several centrosomal proteins including CEP250, CETN3, PCNT and NEK2. Required to anchor microtubules to the centrosome. Also involved in cilium biogenesis by recruiting the BBSome, a ciliary protein complex involved in cilium biogenesis, to the centriolar satellites. Recruits the tubulin polyglutamylase complex (TPGC) to centriolar satellites. This Mus musculus (Mouse) protein is Pericentriolar material 1 protein.